Consider the following 191-residue polypeptide: MSEQLTDQVLVERVQKGDQKAFNLLVVRYQHKVASLVSRYVPSGDVPDVVQESFIKAYRALDSFRGDSAFYTWLYRIAVNTAKNYLVAQGRRPPSSDVDAIEAENFESGGALKEISNPENLMLSEELRQIVFRTIESLPEDLRMAITLRELDGLSYEEIAAIMDCPVGTVRSRIFRAREAIDNKVQPLIRR.

A binds RNAP core region spans residues 1 to 153; the sequence is MSEQLTDQVL…MAITLRELDG (153 aa). Positions 25–92 are sigma-70 factor domain-2; that stretch reads LVVRYQHKVA…KNYLVAQGRR (68 aa). A Polymerase core binding motif is present at residues 48 to 61; that stretch reads DVVQESFIKAYRAL. Positions 129–180 are sigma-70 factor domain-4; sequence QIVFRTIESLPEDLRMAITLRELDGLSYEEIAAIMDCPVGTVRSRIFRAREA. The H-T-H motif DNA-binding region spans 156 to 175; the sequence is YEEIAAIMDCPVGTVRSRIF.

The protein belongs to the sigma-70 factor family. ECF subfamily. Interacts transiently with the RNAP catalytic core formed by RpoA, RpoB, RpoC and RpoZ (2 alpha, 1 beta, 1 beta' and 1 omega subunit) to form the RNAP holoenzyme that can initiate transcription. Interacts 1:1 with anti-sigma-E factor RseA which prevents binding to RNAP catalytic core.

It is found in the cytoplasm. ECF sigma-E is held in an inactive form by its cognate anti-sigma factor (RseA) until released by regulated intramembrane proteolysis (RIP). RIP occurs when an extracytoplasmic signal (periplasmic, acid or heat stress) triggers a concerted proteolytic cascade to transmit information and elicit cellular responses. In S.typhimurium there are 2 cascades, the heat shock response which depends on DegS and RseP, and acid response which depends only on RseP. The anti-sigma factor RseA is an inner membrane protein, binding sigma-E in the cytoplasm and RseB in the periplasm. RseA is first cut extracytoplasmically (site-1 protease, S1P, by DegS), then within the membrane itself (site-2 protease, S2P, by RseP), while cytoplasmic proteases (predominantly ClpX-ClpP) finish degrading the regulatory protein, liberating sigma-E. Degradation of RseA requires 2 signals to activate DegS; an outer membrane protein (OMP) signal activates DegS, while an LPS signal causes release of RseB from RseA, freeing RseA to be cleaved. OMP stress can be abrogated by overexpression of the sRNA rybB. Its function is as follows. Sigma factors are initiation factors that promote the attachment of RNA polymerase (RNAP) to specific initiation sites and are then released. Extracytoplasmic function (ECF) sigma-E controls the envelope stress response, responding to periplasmic protein stress, increased levels of periplasmic lipopolysaccharide (LPS) as well as acid stress, heat shock and oxidative stress; it controls protein processing in the extracytoplasmic compartment. The polypeptide is ECF RNA polymerase sigma-E factor (rpoE) (Salmonella typhimurium (strain 14028s / SGSC 2262)).